We begin with the raw amino-acid sequence, 137 residues long: 1,4-dihydroxy-2-naphthoyl-CoA hydrolase (137 aa).

Aspartate 13 is an active-site residue.

Belongs to the 4-hydroxybenzoyl-CoA thioesterase family. DHNA-CoA hydrolase subfamily.

The catalysed reaction is 1,4-dihydroxy-2-naphthoyl-CoA + H2O = 1,4-dihydroxy-2-naphthoate + CoA + H(+). Its pathway is cofactor biosynthesis; phylloquinone biosynthesis. It functions in the pathway quinol/quinone metabolism; 1,4-dihydroxy-2-naphthoate biosynthesis; 1,4-dihydroxy-2-naphthoate from chorismate: step 7/7. In terms of biological role, catalyzes the hydrolysis of 1,4-dihydroxy-2-naphthoyl-CoA (DHNA-CoA) to 1,4-dihydroxy-2-naphthoate (DHNA), a reaction involved in phylloquinone (vitamin K1) biosynthesis. This chain is 1,4-dihydroxy-2-naphthoyl-CoA hydrolase, found in Crocosphaera subtropica (strain ATCC 51142 / BH68) (Cyanothece sp. (strain ATCC 51142)).